We begin with the raw amino-acid sequence, 288 residues long: Type II iodothyronine deiodinase (288 aa).

The Lumenal segment spans residues M1 to N5. Residues L6 to Y26 traverse the membrane as a helical; Signal-anchor for type III membrane protein segment. Over D27–R288 the chain is Cytoplasmic. The interval S99–T130 is disordered. The active site involves U160. A non-standard amino acid (selenocysteine) is located at residue U160.

The protein belongs to the iodothyronine deiodinase family. Predominantly monomer. Can form homodimers but homodimerization is not essential for enzyme activity. Expressed in intestine, liver, kidney and brain of immediately premetamorphic larvae, of larvae in all stages of metamorphosis and of parasitic feeding juveniles. In immediately premetamorphic larvae, levels are significantly higher in intestine and liver than in kidney and brain.

Its subcellular location is the endoplasmic reticulum membrane. It catalyses the reaction 3,3',5-triiodo-L-thyronine + iodide + A + H(+) = L-thyroxine + AH2. It carries out the reaction 3,3'-diiodo-L-thyronine + iodide + A + H(+) = 3,3',5'-triiodo-L-thyronine + AH2. The enzyme catalyses 3'-iodo-L-thyronine + iodide + A + H(+) = 3',5'-diiodo-L-thyronine + AH2. The catalysed reaction is 3,3'-diiodothyronamine + iodide + A + H(+) = 3,3',5'-triiodothyronamine + AH2. It catalyses the reaction 3'-iodothyronamine + iodide + A + H(+) = 3',5'-diiodothyronamine + AH2. Its function is as follows. Plays a crucial role in the metabolism of thyroid hormones (TH) and has specific roles in TH activation and inactivation by deiodination. Catalyzes the deiodination of L-thyroxine (T4) to 3,5,3'-triiodothyronine (T3), 3,3',5'-triiodothyronine (rT3) to 3,3'-diiodothyronine (3,3'-T2) and 3',5'-diiodothyronine (3',5'-T2) to 3'-monoiodothyronine (3'-T1) via outer-ring deiodination (ORD). Catalyzes the phenolic ring deiodinations of 3,3',5'-triiodothyronamine and 3',5'- diiodothyronamine. The polypeptide is Type II iodothyronine deiodinase (Petromyzon marinus (Sea lamprey)).